The chain runs to 1044 residues: Probable translation initiation factor IF-2 (1044 aa).

The DOD-type homing endonuclease domain maps to 173-265; that stretch reads FAGTIFGREN…LSLILLRLGI (93 aa). Residues 451–668 enclose the tr-type G domain; the sequence is TTETHNFIAN…LIAGLSQKYL (218 aa). GTP is bound by residues 524-528 and 578-581; these read DTPGH and NKID.

This sequence belongs to the TRAFAC class translation factor GTPase superfamily. Classic translation factor GTPase family. IF-2 subfamily. This protein undergoes a protein self splicing that involves a post-translational excision of the intervening region (intein) followed by peptide ligation.

In terms of biological role, function in general translation initiation by promoting the binding of the formylmethionine-tRNA to ribosomes. Seems to function along with eIF-2. The chain is Probable translation initiation factor IF-2 (infB) from Pyrococcus horikoshii (strain ATCC 700860 / DSM 12428 / JCM 9974 / NBRC 100139 / OT-3).